The chain runs to 170 residues: MLSFVVMSFLIFVIVMVNEHKAHLSVIQKMILAVVNGSITIILSIIVFYIFYPQNISLFLITAGILTVFVFLYGLLLFLFGFTHRELSYLSKYDKYKFLCKFTIEMFSSLTNHAFLTISAIVLYQIQHPKPTIDFIVMIGMITISVIVVMLLFLKTYSIIIKQLKKLENN.

The next 3 membrane-spanning stretches (helical) occupy residues 31–51, 58–78, and 133–153; these read ILAV…FYIF, LFLI…LLLF, and IDFI…MLLF.

To M.jannaschii MJ0554 and MJ0587.

It is found in the cell membrane. This is an uncharacterized protein from Methanocaldococcus jannaschii (strain ATCC 43067 / DSM 2661 / JAL-1 / JCM 10045 / NBRC 100440) (Methanococcus jannaschii).